The following is an 860-amino-acid chain: DNA gyrase subunit A (860 aa).

The Topo IIA-type catalytic domain occupies 34–503; sequence LPDARDGLKP…EDGELIDTDL (470 aa). Y122 (O-(5'-phospho-DNA)-tyrosine intermediate) is an active-site residue. The short motif at 530–536 is the GyrA-box element; that stretch reads QNRATRG.

This sequence belongs to the type II topoisomerase GyrA/ParC subunit family. Heterotetramer, composed of two GyrA and two GyrB chains. In the heterotetramer, GyrA contains the active site tyrosine that forms a transient covalent intermediate with DNA, while GyrB binds cofactors and catalyzes ATP hydrolysis.

It is found in the cytoplasm. It catalyses the reaction ATP-dependent breakage, passage and rejoining of double-stranded DNA.. Functionally, a type II topoisomerase that negatively supercoils closed circular double-stranded (ds) DNA in an ATP-dependent manner to modulate DNA topology and maintain chromosomes in an underwound state. Negative supercoiling favors strand separation, and DNA replication, transcription, recombination and repair, all of which involve strand separation. Also able to catalyze the interconversion of other topological isomers of dsDNA rings, including catenanes and knotted rings. Type II topoisomerases break and join 2 DNA strands simultaneously in an ATP-dependent manner. The sequence is that of DNA gyrase subunit A from Synechocystis sp. (strain ATCC 27184 / PCC 6803 / Kazusa).